A 32-amino-acid chain; its full sequence is uncharacterized protein (32 aa).

This is an uncharacterized protein from Enterobacteria phage T4 (Bacteriophage T4).